The following is a 98-amino-acid chain: Plastocyanin (98 aa).

Positions 1 to 98 (AAIVKLGGDD…AGMKMTITVQ (98 aa)) constitute a Plastocyanin-like domain. Cu cation-binding residues include H38, C83, H86, and M91.

The protein belongs to the plastocyanin family. The cofactor is Cu(2+).

The protein resides in the plastid. It localises to the chloroplast thylakoid membrane. In terms of biological role, participates in electron transfer between P700 and the cytochrome b6-f complex in photosystem I. The polypeptide is Plastocyanin (PETE) (Ulva prolifera (Green seaweed)).